A 292-amino-acid chain; its full sequence is MAGSLNEIKSKIASTKKTSQITGAMQMVSASKLAKSEQLAQSFQIYASKVRQITTDLLRGELMASDTSNPMLIRRPVQKSGYIVITSDSGLKGSYNSSILKAVMGMIEQDHDSKDEYEIIAIGSMGADFFRARGINPVFELRGLADNPSFEEVQKIISKSVEMYKNELFDELYVCYNHHVNSLTSQVRVQQMLPVEDLDHNEADGYTATFELEPNREVILEQLLTQYAESTIYGAILDAKTAENAAGMTAMQTATDNAKNVINDLTIQYNRARQAAITQEITEIVAGASALE.

The protein belongs to the ATPase gamma chain family. As to quaternary structure, F-type ATPases have 2 components, CF(1) - the catalytic core - and CF(0) - the membrane proton channel. CF(1) has five subunits: alpha(3), beta(3), gamma(1), delta(1), epsilon(1). CF(0) has three main subunits: a, b and c.

Its subcellular location is the cell membrane. Functionally, produces ATP from ADP in the presence of a proton gradient across the membrane. The gamma chain is believed to be important in regulating ATPase activity and the flow of protons through the CF(0) complex. The protein is ATP synthase gamma chain of Streptococcus suis (strain 05ZYH33).